Here is a 292-residue protein sequence, read N- to C-terminus: MKYRKFIILVLSILIILPVSTLDGHHIANADDDSPKKLKYKENSALALNYHRVRKANFLNNFIYFFSSSKEIKNYSVSQSQFESQIKWLKSHDAKFLTLKEFLYYKKKGKFPKRSVWINFDDMDETIYENAYPILKKYKIPATGFIITGHVGEENFHNLDMISKKELKEMYKTGLWEFETHTHDLHNLSKNNKSKLMKASEATIIKDLNKSEKYLTKNFKKSQKTIAYPYGLMNDDKLPVIKKAGLKYGFSLEEKAVTPNSNDYYIPRILISDDAFEHLIKRWDGFHEKDET.

The first 28 residues, 1 to 28 (MKYRKFIILVLSILIILPVSTLDGHHIA), serve as a signal peptide directing secretion. Residues 114-292 (RSVWINFDDM…WDGFHEKDET (179 aa)) form the NodB homology domain.

The protein belongs to the polysaccharide deacetylase family.

The protein localises to the secreted. The protein resides in the cell wall. Catalyzes the N-deacetylation of poly-beta-1,6-N-acetyl-D-glucosamine (PNAG, also referred to as PIA), a biofilm adhesin polysaccharide. N-deacetylation is crucial for attachment of the polysaccharide to the bacterial cell surface; it leads to the introduction of positive charges in the otherwise neutral PIA polymer, allowing electrostatic interactions. The polypeptide is Poly-beta-1,6-N-acetyl-D-glucosamine N-deacetylase (icaB) (Staphylococcus aureus (strain COL)).